A 142-amino-acid polypeptide reads, in one-letter code: Prefoldin subunit alpha 1 (142 aa).

This sequence belongs to the prefoldin subunit alpha family. As to quaternary structure, heterohexamer of two alpha and four beta subunits.

It localises to the cytoplasm. In terms of biological role, molecular chaperone capable of stabilizing a range of proteins. Seems to fulfill an ATP-independent, HSP70-like function in archaeal de novo protein folding. The protein is Prefoldin subunit alpha 1 (pfdA1) of Methanocaldococcus jannaschii (strain ATCC 43067 / DSM 2661 / JAL-1 / JCM 10045 / NBRC 100440) (Methanococcus jannaschii).